A 552-amino-acid chain; its full sequence is Protein FAM234A (552 aa).

Over 1 to 48 the chain is Cytoplasmic; it reads MTDGKDLEAEIHPLKSENRKVPENAGALAGKEPRGTPAPQTRLSHCRT. Residues 49-69 traverse the membrane as a helical; Signal-anchor for type II membrane protein segment; the sequence is AAFFLSLFACLLVVFVVSFII. Residues 70 to 552 are Extracellular-facing; sequence PCPDRPALQG…LSRLRYRSEA (483 aa). 3 N-linked (GlcNAc...) asparagine glycosylation sites follow: Asn115, Asn238, and Asn473.

This sequence belongs to the FAM234 family.

Its subcellular location is the membrane. In Bos taurus (Bovine), this protein is Protein FAM234A (FAM234A).